Reading from the N-terminus, the 116-residue chain is uncharacterized protein (116 aa).

The region spanning 5-113 (EVKMVVLSTE…TGNGLVFYSP (109 aa)) is the VOC domain. An Isoglutamyl lysine isopeptide (Lys-Gln) (interchain with Q-Cter in protein Pup) cross-link involves residue lysine 76.

This is an uncharacterized protein from Mycolicibacterium smegmatis (strain ATCC 700084 / mc(2)155) (Mycobacterium smegmatis).